The chain runs to 276 residues: Protein HemX (276 aa).

8 helical membrane passes run 9–29 (LNEG…IDFL), 40–60 (FWLL…FMWV), 66–86 (VLNV…LSLV), 93–113 (VDFI…IHTF), 132–152 (LVIH…SFVF), 187–207 (VLNV…VIWA), 217–237 (FDAK…YLYI), and 247–267 (VAAL…FLLG).

To M.leprae U1620K.

The protein resides in the cell membrane. Required for HemL synthesis. In Bacillus subtilis (strain 168), this protein is Protein HemX (hemX).